A 238-amino-acid chain; its full sequence is Ion-translocating oxidoreductase complex subunit E (238 aa).

The next 6 helical transmembrane spans lie at 24-44 (ALWQ…TLAV), 52-72 (LGMG…ISSM), 84-104 (VMIG…NAWM), 106-126 (ELYK…AVLG), 141-161 (ILDG…IGGI), and 195-215 (GILL…LLAA).

The protein belongs to the NqrDE/RnfAE family. In terms of assembly, the complex is composed of six subunits: RnfA, RnfB, RnfC, RnfD, RnfE and RnfG.

It is found in the cell inner membrane. Its function is as follows. Part of a membrane-bound complex that couples electron transfer with translocation of ions across the membrane. This is Ion-translocating oxidoreductase complex subunit E from Azotobacter vinelandii (strain DJ / ATCC BAA-1303).